The primary structure comprises 278 residues: Achaete-scute homolog 5 (278 aa).

Residues 1-66 (MPMGAAERGA…GPFGGGLALG (66 aa)) are disordered. In terms of domain architecture, bHLH spans 155–207 (AFIQKRNERERQRVKCVNEGYARLRGHLPGALAEKRLSKVETLRAAIRYIKYL). The tract at residues 214–278 (APDGSTPPAS…PFLESEESWH (65 aa)) is disordered. The segment covering 230 to 239 (GPCPAPPATP) has biased composition (pro residues). The span at 240–249 (RPDRPGDGEA) shows a compositional bias: basic and acidic residues. Residues 252-271 (PSSLVPESSESSCFSPSPFL) are compositionally biased toward low complexity.

In terms of assembly, interacts with transcription factor TCF3/E12.

The protein resides in the nucleus. In terms of biological role, transcription factor. Probably binds E-box motifs 5'-CANNTG-3' in complex with transcription factor TCF3/E12. Negatively modulates transcription of target genes such as CDH1/E-cadherin, perhaps by recruiting the PRC2 repressive complex to regulatory elements. Regulates ameloblast development and tooth germ growth, perhaps acting by positively modulating migration of inner enamel epithelium (IEE) cells. Plays a role in enamel formation. This Homo sapiens (Human) protein is Achaete-scute homolog 5 (ASCL5).